We begin with the raw amino-acid sequence, 322 residues long: 1-aminocyclopropane-1-carboxylate oxidase 1 (322 aa).

A Fe2OG dioxygenase domain is found at proline 159–proline 259. 3 residues coordinate Fe cation: histidine 183, aspartate 185, and histidine 240.

Belongs to the iron/ascorbate-dependent oxidoreductase family. Fe cation serves as cofactor.

The enzyme catalyses 1-aminocyclopropane-1-carboxylate + L-ascorbate + O2 = ethene + L-dehydroascorbate + hydrogen cyanide + CO2 + 2 H2O. It functions in the pathway alkene biosynthesis; ethylene biosynthesis via S-adenosyl-L-methionine; ethylene from S-adenosyl-L-methionine: step 2/2. This chain is 1-aminocyclopropane-1-carboxylate oxidase 1 (ACO1), found in Oryza sativa subsp. japonica (Rice).